Consider the following 1730-residue polypeptide: Nebulin-related-anchoring protein (1730 aa).

The LIM zinc-binding domain maps to 4 to 64; the sequence is QPCSRCGYGV…HAHNPKNNTF (61 aa). Nebulin repeat units follow at residues 63 to 97, 156 to 166, 175 to 202, 203 to 237, 246 to 273, 298 to 307, 316 to 343, 348 to 382, 389 to 417, 419 to 453, 487 to 521, 522 to 556, 558 to 592, 602 to 626, 627 to 661, 662 to 692, 702 to 724, 726 to 760, 761 to 795, 797 to 831, 844 to 869, 870 to 896, 901 to 935, 945 to 963, 969 to 1003, 1004 to 1038, 1040 to 1074, 1078 to 1112, 1113 to 1139, 1144 to 1178, 1183 to 1206, 1212 to 1246, 1247 to 1281, 1283 to 1317, 1321 to 1355, 1356 to 1390, 1391 to 1421, 1429 to 1449, 1455 to 1481, 1490 to 1524, 1526 to 1560, 1564 to 1598, 1599 to 1626, and 1640 to 1664; these read TFTS…QCKS, EYTEDYEQPRG, TPAY…ERIS, RFST…QQRG, TPAY…KEMR, YPEEYEEHRG, TPAY…KMKG, HSLP…SSRG, ETPQ…NHMR, RYEG…HDIV, KYSS…KNKL, NYTL…KTKG, GFEM…KTKG, LLHS…ESKT, RFHL…EYTV, LPED…WMKG, NLEQ…RVDE, KFTS…QSVH, QYTI…NQKA, GFEL…RSRG, QMSH…DTKS, QCHV…VGYK, HFTA…WMKG, NVEQ…KYRQ, KFTS…NIKH, HYTP…KLRD, GYKL…KMKG, GSRS…HSKA, QFHL…QDYK, QYTS…FMRG, IPGT…KYRQ, KYTA…DARH, EYTM…NLRA, GYKL…KERG, GPQS…SSQA, QFHL…KFTA, LPED…GMKG, SPQM…KYRK, KFTT…RMYR, RYTL…QTRA, SYDF…RDRG, GYRS…KSRS, QFHS…HYRQ, and LRHA…LTRG. S1081 bears the Phosphoserine mark. The segment at 1595 to 1620 is disordered; the sequence is KSRSQFHSSTDQPGLLQAKRSQQLAS. Positions 1596-1606 are enriched in polar residues; it reads SRSQFHSSTDQ.

As to quaternary structure, interacts with actin, alpha-actinin, KLHL41, TLN1 and VCL. Interacts with CSRP3. As to expression, expressed in cardiac and skeletal muscle.

Its function is as follows. May be involved in anchoring the terminal actin filaments in the myofibril to the membrane and in transmitting tension from the myofibrils to the extracellular matrix. In Homo sapiens (Human), this protein is Nebulin-related-anchoring protein.